Reading from the N-terminus, the 144-residue chain is Nucleoside diphosphate kinase (144 aa).

The ATP site is built by lysine 11, phenylalanine 59, arginine 87, threonine 93, arginine 104, and asparagine 114. The active-site Pros-phosphohistidine intermediate is the histidine 117.

Belongs to the NDK family. Homotetramer. It depends on Mg(2+) as a cofactor.

It is found in the cytoplasm. The catalysed reaction is a 2'-deoxyribonucleoside 5'-diphosphate + ATP = a 2'-deoxyribonucleoside 5'-triphosphate + ADP. The enzyme catalyses a ribonucleoside 5'-diphosphate + ATP = a ribonucleoside 5'-triphosphate + ADP. In terms of biological role, major role in the synthesis of nucleoside triphosphates other than ATP. The ATP gamma phosphate is transferred to the NDP beta phosphate via a ping-pong mechanism, using a phosphorylated active-site intermediate. This chain is Nucleoside diphosphate kinase, found in Aliivibrio salmonicida (strain LFI1238) (Vibrio salmonicida (strain LFI1238)).